Here is a 301-residue protein sequence, read N- to C-terminus: MKEILYRRSIQDTVRIKGIGLHSGKEVNLTAHPAPSGTGIVFEYRKGLEKASISAELSNVVDTSNATTLGDGIHKIQTVEHLLAAVYALGLTDLILEIDAVEVPIMDGSSLPFLQALESAGIIEYPEIVEPIYIQSPLWVVDGDKYLVLLPSDELKVTYTIDFNHPLLKGQSITVSLDREKIKQEILPARTFGFLKDVEALQARGLAMGGSLDNAIVLTQDGYLNQQLRFENECVRHKILDLFGDISIAGRPIIGHYLASKAGHALDISMAKLVMSNVTGDEISKYKSRRIPLFKRKAVVV.

Zn(2+)-binding residues include histidine 81, histidine 237, and aspartate 241. Residue histidine 264 is the Proton donor of the active site.

It belongs to the LpxC family. The cofactor is Zn(2+).

It carries out the reaction a UDP-3-O-[(3R)-3-hydroxyacyl]-N-acetyl-alpha-D-glucosamine + H2O = a UDP-3-O-[(3R)-3-hydroxyacyl]-alpha-D-glucosamine + acetate. It participates in glycolipid biosynthesis; lipid IV(A) biosynthesis; lipid IV(A) from (3R)-3-hydroxytetradecanoyl-[acyl-carrier-protein] and UDP-N-acetyl-alpha-D-glucosamine: step 2/6. In terms of biological role, catalyzes the hydrolysis of UDP-3-O-myristoyl-N-acetylglucosamine to form UDP-3-O-myristoylglucosamine and acetate, the committed step in lipid A biosynthesis. The chain is UDP-3-O-acyl-N-acetylglucosamine deacetylase from Leptospira interrogans serogroup Icterohaemorrhagiae serovar copenhageni (strain Fiocruz L1-130).